Reading from the N-terminus, the 343-residue chain is Glycerol-3-phosphate dehydrogenase [NAD(P)+] (343 aa).

Positions 22, 23, 43, and 117 each coordinate NADPH. Lysine 117, glycine 146, and threonine 148 together coordinate sn-glycerol 3-phosphate. Alanine 150 contacts NADPH. Lysine 202, aspartate 255, serine 265, arginine 266, and asparagine 267 together coordinate sn-glycerol 3-phosphate. Lysine 202 serves as the catalytic Proton acceptor. Residue arginine 266 participates in NADPH binding. Valine 290 and glutamate 292 together coordinate NADPH.

This sequence belongs to the NAD-dependent glycerol-3-phosphate dehydrogenase family.

Its subcellular location is the cytoplasm. The catalysed reaction is sn-glycerol 3-phosphate + NAD(+) = dihydroxyacetone phosphate + NADH + H(+). The enzyme catalyses sn-glycerol 3-phosphate + NADP(+) = dihydroxyacetone phosphate + NADPH + H(+). It functions in the pathway membrane lipid metabolism; glycerophospholipid metabolism. Its function is as follows. Catalyzes the reduction of the glycolytic intermediate dihydroxyacetone phosphate (DHAP) to sn-glycerol 3-phosphate (G3P), the key precursor for phospholipid synthesis. In Aliivibrio fischeri (strain ATCC 700601 / ES114) (Vibrio fischeri), this protein is Glycerol-3-phosphate dehydrogenase [NAD(P)+].